Consider the following 156-residue polypeptide: Small ribosomal subunit protein uS7 (156 aa).

The protein belongs to the universal ribosomal protein uS7 family. Part of the 30S ribosomal subunit. Contacts proteins S9 and S11.

Functionally, one of the primary rRNA binding proteins, it binds directly to 16S rRNA where it nucleates assembly of the head domain of the 30S subunit. Is located at the subunit interface close to the decoding center, probably blocks exit of the E-site tRNA. This chain is Small ribosomal subunit protein uS7, found in Bacillus licheniformis (strain ATCC 14580 / DSM 13 / JCM 2505 / CCUG 7422 / NBRC 12200 / NCIMB 9375 / NCTC 10341 / NRRL NRS-1264 / Gibson 46).